A 352-amino-acid polypeptide reads, in one-letter code: Molybdenum import ATP-binding protein ModC (352 aa).

An ABC transporter domain is found at 1-229; the sequence is MLELNFSQTL…SVMHPWLPKE (229 aa). 31–38 contacts ATP; it reads GVSGAGKT. One can recognise a Mop domain in the interval 289–352; that stretch reads QTSIRNVLRA…AQVKSVSITA (64 aa).

This sequence belongs to the ABC transporter superfamily. Molybdate importer (TC 3.A.1.8) family. In terms of assembly, the complex is composed of two ATP-binding proteins (ModC), two transmembrane proteins (ModB) and a solute-binding protein (ModA).

The protein resides in the cell inner membrane. The enzyme catalyses molybdate(out) + ATP + H2O = molybdate(in) + ADP + phosphate + H(+). In terms of biological role, part of the ABC transporter complex ModABC involved in molybdenum import. Responsible for energy coupling to the transport system. This is Molybdenum import ATP-binding protein ModC from Salmonella typhi.